Reading from the N-terminus, the 208-residue chain is Small ribosomal subunit protein uS2 (208 aa).

A disordered region spans residues 189–208 (KPDQDLPVPPEEFETKLVQS).

This sequence belongs to the universal ribosomal protein uS2 family.

The chain is Small ribosomal subunit protein uS2 (rps2) from Pyrobaculum aerophilum (strain ATCC 51768 / DSM 7523 / JCM 9630 / CIP 104966 / NBRC 100827 / IM2).